The sequence spans 470 residues: Putative multidrug resistance protein MdtD (470 aa).

The Periplasmic segment spans residues 1 to 11; sequence MTELPDNTRWQ. Residues 12–32 form a helical membrane-spanning segment; the sequence is LWIVAFGFFMQSLDTTIVNTA. Residues 33-48 lie on the Cytoplasmic side of the membrane; that stretch reads LPSMAKSLGESPLHMH. A helical transmembrane segment spans residues 49–69; sequence MVVVSYVLTVAVMLPASGWLA. Topologically, residues 70–76 are periplasmic; it reads DKIGVRN. The helical transmembrane segment at 77 to 97 threads the bilayer; the sequence is IFFAAIVLFTLGSLFCALSGT. Topologically, residues 98–101 are cytoplasmic; it reads LNQL. Residues 102 to 124 traverse the membrane as a helical segment; sequence VLARVLQGVGGAMMVPVGRLTVM. Over 125-137 the chain is Periplasmic; that stretch reads KIVPRAQYMAAMT. A helical membrane pass occupies residues 138-158; that stretch reads FVTLPGQIGPLLGPALGGVLV. Residues 159–164 lie on the Cytoplasmic side of the membrane; that stretch reads EYASWH. A helical transmembrane segment spans residues 165-185; it reads WIFLINIPVGIVGAMATFMLM. Topologically, residues 186–196 are periplasmic; it reads PNYIIETRRFD. Residues 197 to 217 traverse the membrane as a helical segment; sequence LPGFLLLAIGMAVLTLALDGS. Residues 218-224 lie on the Cytoplasmic side of the membrane; the sequence is KSMGISP. A helical membrane pass occupies residues 225 to 245; sequence WTLAGLAAGGAAAILLYLFHA. Topologically, residues 246 to 262 are periplasmic; the sequence is KKNSGALFSLRLFRTPT. Residues 263–283 form a helical membrane-spanning segment; it reads FSLGLLGSFAGRIGSGMLPFM. At 284–285 the chain is on the cytoplasmic side; sequence TP. A helical transmembrane segment spans residues 286–306; that stretch reads VFLQIGLGFSPFHAGLMMIPM. Topologically, residues 307-341 are periplasmic; that stretch reads VLGSMGMKRIVVQIVNRFGYRRVLVATTLGLALVS. Residues 342 to 362 form a helical membrane-spanning segment; it reads LLFMSVALLGWYYLLPLVLLL. The Cytoplasmic portion of the chain corresponds to 363-395; sequence QGMVNSARFSSMNTLTLKDLPDTLASSGNSLLS. A helical transmembrane segment spans residues 396–416; the sequence is MIMQLSMSIGVTIAGMLLGMF. Topologically, residues 417-430 are periplasmic; that stretch reads GQQHIGIDSSATHH. A helical transmembrane segment spans residues 431–451; it reads VFMYTWLCMAVIIALPAIIFA. At 452–470 the chain is on the cytoplasmic side; the sequence is RVPNDTQQNMVISRRKRSL.

This sequence belongs to the major facilitator superfamily. TCR/Tet family.

The protein resides in the cell inner membrane. This Salmonella typhimurium (strain LT2 / SGSC1412 / ATCC 700720) protein is Putative multidrug resistance protein MdtD.